We begin with the raw amino-acid sequence, 840 residues long: Cullin-4 (840 aa).

Over residues 1–11 the composition is skewed to polar residues; the sequence is MTSGAPPTIST. The disordered stretch occupies residues 1–82; the sequence is MTSGAPPTIS…TGNSSRTTAT (82 aa). Positions 33–48 are enriched in basic and acidic residues; sequence TEAKQMRGDTENRSDG. The span at 69-82 shows a compositional bias: polar residues; sequence FRSQTGNSSRTTAT. A Cullin neddylation domain is found at 772–831; sequence DRQYKIDAAVVRIMKARKQLNHQTLMTELLQQLRFPVSTADIKKRLESLIEREYISRDPE. Lysine 786 participates in a covalent cross-link: Glycyl lysine isopeptide (Lys-Gly) (interchain with G-Cter in NEDD8).

The protein belongs to the cullin family. In terms of assembly, part of an E3 ubiquitin-protein ligase complex including cul-4 and ddb-1. In terms of processing, neddylated. Deneddylated via its interaction with the COP9 signalosome (CSN) complex.

Its pathway is protein modification; protein ubiquitination. Component of cullin-based E3 ubiquitin-protein ligase complexes which mediate the ubiquitination and subsequent proteasomal degradation of target proteins. The functional specificity of the E3 ubiquitin-protein ligase complex depends on the variable substrate recognition component. In association with ddb-1 directs ubiquitination of cdt-1 during S phase and is required for restraining DNA rereplication. Probably is involved in ubiquitination of cki-1. The polypeptide is Cullin-4 (cul-4) (Caenorhabditis elegans).